Consider the following 204-residue polypeptide: Probable nicotinate-nucleotide adenylyltransferase (204 aa).

This sequence belongs to the NadD family.

It catalyses the reaction nicotinate beta-D-ribonucleotide + ATP + H(+) = deamido-NAD(+) + diphosphate. It functions in the pathway cofactor biosynthesis; NAD(+) biosynthesis; deamido-NAD(+) from nicotinate D-ribonucleotide: step 1/1. In terms of biological role, catalyzes the reversible adenylation of nicotinate mononucleotide (NaMN) to nicotinic acid adenine dinucleotide (NaAD). The polypeptide is Probable nicotinate-nucleotide adenylyltransferase (Mycobacterium sp. (strain JLS)).